The chain runs to 87 residues: Phosphoribosyl-ATP pyrophosphatase (87 aa).

This sequence belongs to the PRA-PH family.

The protein localises to the cytoplasm. It carries out the reaction 1-(5-phospho-beta-D-ribosyl)-ATP + H2O = 1-(5-phospho-beta-D-ribosyl)-5'-AMP + diphosphate + H(+). It functions in the pathway amino-acid biosynthesis; L-histidine biosynthesis; L-histidine from 5-phospho-alpha-D-ribose 1-diphosphate: step 2/9. This Bifidobacterium longum (strain DJO10A) protein is Phosphoribosyl-ATP pyrophosphatase.